Reading from the N-terminus, the 208-residue chain is Ribosome maturation factor RimP (208 aa).

The interval 175–208 (GEDVEDLVADPGADDELDELDELDELDDGDEDEQ) is disordered. Residues 177-208 (DVEDLVADPGADDELDELDELDELDDGDEDEQ) are compositionally biased toward acidic residues.

The protein belongs to the RimP family.

It localises to the cytoplasm. Required for maturation of 30S ribosomal subunits. This Kineococcus radiotolerans (strain ATCC BAA-149 / DSM 14245 / SRS30216) protein is Ribosome maturation factor RimP.